We begin with the raw amino-acid sequence, 290 residues long: Light-independent protochlorophyllide reductase iron-sulfur ATP-binding protein (290 aa).

Residues 10–15 (GIGKST) and Lys39 contribute to the ATP site. Residue Ser14 coordinates Mg(2+). [4Fe-4S] cluster-binding residues include Cys95 and Cys129. 180–181 (NR) contacts ATP.

This sequence belongs to the NifH/BchL/ChlL family. As to quaternary structure, homodimer. Protochlorophyllide reductase is composed of three subunits; ChlL, ChlN and ChlB. Requires [4Fe-4S] cluster as cofactor.

The protein localises to the plastid. It is found in the chloroplast. It carries out the reaction chlorophyllide a + oxidized 2[4Fe-4S]-[ferredoxin] + 2 ADP + 2 phosphate = protochlorophyllide a + reduced 2[4Fe-4S]-[ferredoxin] + 2 ATP + 2 H2O. It participates in porphyrin-containing compound metabolism; chlorophyll biosynthesis (light-independent). Functionally, component of the dark-operative protochlorophyllide reductase (DPOR) that uses Mg-ATP and reduced ferredoxin to reduce ring D of protochlorophyllide (Pchlide) to form chlorophyllide a (Chlide). This reaction is light-independent. The L component serves as a unique electron donor to the NB-component of the complex, and binds Mg-ATP. In Anthoceros angustus (Hornwort), this protein is Light-independent protochlorophyllide reductase iron-sulfur ATP-binding protein.